Reading from the N-terminus, the 623-residue chain is UvrABC system protein C (623 aa).

Residues 27–105 enclose the GIY-YIG domain; the sequence is GSPGVYRMLD…IKQLKPRYNV (79 aa). The 36-residue stretch at 215 to 250 folds into the UVR domain; sequence TKVQANLAEQMQAASEAMEFERAAALRDRIKALTQV.

The protein belongs to the UvrC family. Interacts with UvrB in an incision complex.

The protein localises to the cytoplasm. Functionally, the UvrABC repair system catalyzes the recognition and processing of DNA lesions. UvrC both incises the 5' and 3' sides of the lesion. The N-terminal half is responsible for the 3' incision and the C-terminal half is responsible for the 5' incision. The chain is UvrABC system protein C from Cereibacter sphaeroides (strain ATCC 17023 / DSM 158 / JCM 6121 / CCUG 31486 / LMG 2827 / NBRC 12203 / NCIMB 8253 / ATH 2.4.1.) (Rhodobacter sphaeroides).